A 192-amino-acid polypeptide reads, in one-letter code: Dihydrofolate reductase (192 aa).

In terms of domain architecture, DHFR spans 5–191; it reads NVAIIVAALK…FTYNYTLWTR (187 aa). NADP(+) contacts are provided by residues A11 and 18–24; that span reads GIGYKGK. 32-37 contacts substrate; the sequence is EIRYFK. NADP(+) is bound at residue 56–58; sequence RKT. Residue R72 participates in substrate binding. 78–80 is an NADP(+) binding site; the sequence is SRS. Residues I112 and Y118 each coordinate substrate. 113-120 contacts NADP(+); it reads GGAEIYNE.

It belongs to the dihydrofolate reductase family.

The enzyme catalyses (6S)-5,6,7,8-tetrahydrofolate + NADP(+) = 7,8-dihydrofolate + NADPH + H(+). It participates in cofactor biosynthesis; tetrahydrofolate biosynthesis; 5,6,7,8-tetrahydrofolate from 7,8-dihydrofolate: step 1/1. In terms of biological role, key enzyme in folate metabolism. Catalyzes an essential reaction for de novo glycine and purine synthesis, and for DNA precursor synthesis. The sequence is that of Dihydrofolate reductase (DFR1) from Candida albicans (Yeast).